Consider the following 160-residue polypeptide: Transcriptional repressor NrdR (160 aa).

A zinc finger lies at Cys-3–Cys-34. Residues Pro-49 to Glu-139 enclose the ATP-cone domain.

Belongs to the NrdR family. It depends on Zn(2+) as a cofactor.

Its function is as follows. Negatively regulates transcription of bacterial ribonucleotide reductase nrd genes and operons by binding to NrdR-boxes. The polypeptide is Transcriptional repressor NrdR (Bordetella bronchiseptica (strain ATCC BAA-588 / NCTC 13252 / RB50) (Alcaligenes bronchisepticus)).